Consider the following 198-residue polypeptide: MSILISPSNNTGWGLRFPSKMFGGAKKRSDQHPVRVRGHYRAPWGAHKRGRTGRTTVDDAIDAVVEEARNYTPTPPPVSTVDAAIQTVVRGARRYAKMKRRRRRVARRHRRRPGTAAQRAAAALLNRARRTGRRAAMRAARRLAAGIVTVPPRSRRRAAAAAAAAISAMTQGRRGNVYWVRDSVSGLRVPVRTRPPRN.

Ser-2 carries the N-acetylserine; by host modification. Residues 2 to 24 (SILISPSNNTGWGLRFPSKMFGG) constitute a propeptide that is removed on maturation. The tract at residues 24 to 55 (GAKKRSDQHPVRVRGHYRAPWGAHKRGRTGRT) is disordered. N6-acetyllysine; by host occurs at positions 27 and 48. Over residues 34–52 (VRVRGHYRAPWGAHKRGRT) the composition is skewed to basic residues. 2 positions are modified to phosphothreonine; by host: Thr-55 and Thr-74. Phosphoserine; by host occurs at positions 183 and 185. The Nuclear localization signal signature appears at 188–198 (RVPVRTRPPRN).

The protein belongs to the adenoviridae histone-like nucleoprotein family. In terms of assembly, interacts with the core-capsid bridging protein; this interaction bridges the virus core to the capsid. Interacts with host NPM1; this interaction might play a role in placing the pre-histone-like nucleoprotein on the viral DNA or regulating viral gene expression. Interacts with host HMGB1; this interaction inhibits host immune response. Post-translationally, cleaved near the N-terminus by the viral protease during virion maturation to form the mature protein.

The protein localises to the virion. The protein resides in the host nucleus. Its subcellular location is the host nucleolus. Its function is as follows. Plays a role in the inhibition of host immune response within the nucleus. Interacts with cellular nucleosomes and immobilizes the host immune danger signal HMGB1 on chromatin. In turn, prevents HMGB1 release out of the cell and thus decreases inflammation. Also plays a role in the wrapping and condensation of the viral DNA. May also promote viral genome import into the nucleus. The sequence is that of Pre-histone-like nucleoprotein from Human adenovirus C serotype 2 (HAdV-2).